We begin with the raw amino-acid sequence, 226 residues long: Cytidylate kinase (226 aa).

10–18 (GPASSGKST) contacts ATP.

It belongs to the cytidylate kinase family. Type 1 subfamily.

Its subcellular location is the cytoplasm. The enzyme catalyses CMP + ATP = CDP + ADP. It carries out the reaction dCMP + ATP = dCDP + ADP. The chain is Cytidylate kinase from Streptococcus pyogenes serotype M1.